We begin with the raw amino-acid sequence, 130 residues long: Large ribosomal subunit protein bL21 (130 aa).

Positions 110–130 are disordered; it reads TAPTATEETADATPDTETAAE.

Belongs to the bacterial ribosomal protein bL21 family. As to quaternary structure, part of the 50S ribosomal subunit. Contacts protein L20.

Functionally, this protein binds to 23S rRNA in the presence of protein L20. This chain is Large ribosomal subunit protein bL21, found in Nostoc sp. (strain PCC 7120 / SAG 25.82 / UTEX 2576).